Here is a 973-residue protein sequence, read N- to C-terminus: Translation initiation factor IF-2 (973 aa).

Over residues 97–135 (GHIDLDGGQHKKQQEEPKAKEEPKVKEEPKVKEEPKVKE) the composition is skewed to basic and acidic residues. Disordered stretches follow at residues 97–343 (GHID…EDVQ) and 353–372 (LTNKNNKNNKGAKYRRDKRD). Over residues 136 to 155 (APAAPAAQAPVKPAQPAQAP) the composition is skewed to low complexity. Basic and acidic residues-rich tracts occupy residues 156 to 175 (TEKKEEKVIVVEVEKEKTVE), 183 to 204 (PKVESVKPEQEVEKTEEKDDNL), 212 to 224 (LESKIKVTGKIDL), and 237 to 250 (TKEEKRKERDEKQK). Residues 252–266 (NNNRPGNNSNGPGAP) are compositionally biased toward low complexity. 2 stretches are compositionally biased toward basic and acidic residues: residues 315–326 (PNRDDRPNNDRK) and 333–343 (VKAEVSEEDVQ). In terms of domain architecture, tr-type G spans 472–642 (ARPPIVTVMG…LLEADLLDLK (171 aa)). Residues 481–488 (GHVDHGKT) form a G1 region. 481–488 (GHVDHGKT) is a binding site for GTP. A G2 region spans residues 506–510 (GITQH). Positions 528 to 531 (DTPG) are G3. Residues 528 to 532 (DTPGH) and 582 to 585 (NKID) each bind GTP. Residues 582–585 (NKID) are G4. The segment at 618-620 (SAK) is G5.

Belongs to the TRAFAC class translation factor GTPase superfamily. Classic translation factor GTPase family. IF-2 subfamily.

Its subcellular location is the cytoplasm. Functionally, one of the essential components for the initiation of protein synthesis. Protects formylmethionyl-tRNA from spontaneous hydrolysis and promotes its binding to the 30S ribosomal subunits. Also involved in the hydrolysis of GTP during the formation of the 70S ribosomal complex. The sequence is that of Translation initiation factor IF-2 from Parabacteroides distasonis (strain ATCC 8503 / DSM 20701 / CIP 104284 / JCM 5825 / NCTC 11152).